Reading from the N-terminus, the 660-residue chain is Methionine--tRNA ligase (660 aa).

The 'HIGH' region motif lies at 15–25 (YYPSDKLHIGH). The short motif at 311-315 (KMSKS) is the 'KMSKS' region element. Lys-314 contributes to the ATP binding site. Residues 535–554 (LMGGSKKPEEAPKDEKEESD) form a disordered region. Residues 540-550 (KKPEEAPKDEK) show a composition bias toward basic and acidic residues. Positions 560-660 (DFSKVELRIA…GALPNGSLVK (101 aa)) constitute a tRNA-binding domain.

Belongs to the class-I aminoacyl-tRNA synthetase family. MetG type 2B subfamily. Homodimer.

It is found in the cytoplasm. It carries out the reaction tRNA(Met) + L-methionine + ATP = L-methionyl-tRNA(Met) + AMP + diphosphate. Functionally, is required not only for elongation of protein synthesis but also for the initiation of all mRNA translation through initiator tRNA(fMet) aminoacylation. This is Methionine--tRNA ligase (metG) from Halalkalibacterium halodurans (strain ATCC BAA-125 / DSM 18197 / FERM 7344 / JCM 9153 / C-125) (Bacillus halodurans).